The chain runs to 852 residues: Homeobox-leucine zipper protein ATHB-14 (852 aa).

The interval 1–25 (MMMVHSMSRDMMNRESPDKGLDSGK) is disordered. Positions 7–22 (MSRDMMNRESPDKGLD) are enriched in basic and acidic residues. A DNA-binding region (homeobox) is located at residues 22 to 85 (DSGKYVRYTP…NRRCREKQRK (64 aa)). Residues 80-122 (REKQRKEAARLQTVNRKLNAMNKLLMEENDRLQKQVSNLVYEN) adopt a coiled-coil conformation. The segment at 80–130 (REKQRKEAARLQTVNRKLNAMNKLLMEENDRLQKQVSNLVYENGHMKHQLH) is ZIP domain. The segment covering 130–148 (HTASGTTTDNSCESVVVSG) has biased composition (polar residues). The segment at 130–166 (HTASGTTTDNSCESVVVSGQQHQQQNPNPQHQQRDAN) is disordered. The segment covering 149-160 (QQHQQQNPNPQH) has biased composition (low complexity). In terms of domain architecture, START spans 164–392 (DANNPAGLLS…IAQETSGEVQ (229 aa)).

The protein belongs to the HD-ZIP homeobox family. Class III subfamily. As to quaternary structure, homodimer. Heterodimer with ZPR3. Interacts with ESR1 and ESR2. Interacts with ZPR3. In terms of tissue distribution, expressed in the center of the meristem and on the adaxial side of the leaves.

It localises to the nucleus. Inhibited by ZPR3. In terms of biological role, probable transcription factor involved in the determination of adaxial-abaxial polarity in ovule primordium. Specifies adaxial leaf fates. This Arabidopsis thaliana (Mouse-ear cress) protein is Homeobox-leucine zipper protein ATHB-14 (ATHB-14).